A 417-amino-acid polypeptide reads, in one-letter code: D-amino acid dehydrogenase (417 aa).

3-17 is a binding site for FAD; that stretch reads IVVLGGGVVGVTSAW.

Belongs to the DadA oxidoreductase family. The cofactor is FAD.

The enzyme catalyses a D-alpha-amino acid + A + H2O = a 2-oxocarboxylate + AH2 + NH4(+). It functions in the pathway amino-acid degradation; D-alanine degradation; NH(3) and pyruvate from D-alanine: step 1/1. Functionally, oxidative deamination of D-amino acids. In Aeromonas salmonicida (strain A449), this protein is D-amino acid dehydrogenase.